A 168-amino-acid polypeptide reads, in one-letter code: Cell division inhibitor SulA (168 aa).

The ftsZ binding stretch occupies residues 105–111; it reads ALLTGNY. A lon protease binding region spans residues 161-168; sequence KIHSTLYH.

Belongs to the SulA family. As to quaternary structure, interacts with FtsZ. In terms of processing, is rapidly cleaved and degraded by the Lon protease once DNA damage is repaired.

In terms of biological role, component of the SOS system and an inhibitor of cell division. Accumulation of SulA causes rapid cessation of cell division and the appearance of long, non-septate filaments. In the presence of GTP, binds a polymerization-competent form of FtsZ in a 1:1 ratio, thus inhibiting FtsZ polymerization and therefore preventing it from participating in the assembly of the Z ring. This mechanism prevents the premature segregation of damaged DNA to daughter cells during cell division. The chain is Cell division inhibitor SulA from Pectobacterium carotovorum subsp. carotovorum (strain PC1).